Consider the following 395-residue polypeptide: Multidrug resistance protein MdtL (395 aa).

Transmembrane regions (helical) follow at residues 4 to 24 (FLLCSFALVLLYPAGIDMYLV), 42 to 62 (IAFSVYLAGMATAMLFAGKIA), 69 to 89 (PVAIVGALVFMMASLLCSRAS), 93 to 113 (LFLSGRFLQGVGAGGCYVVAF), 131 to 151 (LLNGITCIVPVLAPVVGHLIM), 158 to 178 (SLFYTMSAMGIIVGLLSLFIL), 217 to 237 (VSVILTFVNASPVLLMEVMGF), 247 to 267 (ALTAGVSMVVSFSTPFALGLF), 271 to 291 (TLMLVSQGLFLTAGMTLSLAH), 295 to 315 (VTLFGLTLICAGFSVGFGVAM), 333 to 353 (LGIAQVCGSSLWIWLAAILGI), and 358 to 378 (MLIGILIGCSIVSILLIFSVA).

This sequence belongs to the major facilitator superfamily. DHA1 family. MdtL (TC 2.A.1.2.22) subfamily.

Its subcellular location is the cell inner membrane. This Salmonella heidelberg (strain SL476) protein is Multidrug resistance protein MdtL.